Reading from the N-terminus, the 573-residue chain is Mucin-13 (573 aa).

The first 17 residues, 1–17 (MKGFLLLSLSLLLVTVG), serve as a signal peptide directing secretion. The span at 16 to 234 (VGSSSQASST…VPSGGSTGPS (219 aa)) shows a compositional bias: low complexity. A disordered region spans residues 16-237 (VGSSSQASST…GGSTGPSDLC (222 aa)). Residues 18–480 (SSSQASSTTS…FGYSGMNCKD (463 aa)) lie on the Extracellular side of the membrane. Residues 233–273 (PSDLCNPNPCKGTASCVKLHSKHFCLCLEGYYYNSSLSSCV) enclose the EGF-like 1 domain. Disulfide bonds link Cys237–Cys248, Cys242–Cys257, and Cys259–Cys272. Residues Asn266, Asn316, and Asn397 are each glycosylated (N-linked (GlcNAc...) asparagine). In terms of domain architecture, SEA spans 274–391 (KGTTFPGDIS…DYVSINLCDH (118 aa)). EGF-like domains follow at residues 385 to 425 (SINL…PFCV) and 425 to 467 (VAVT…RKCE). Disulfide bonds link Cys389-Cys402, Cys394-Cys408, Cys410-Cys424, Cys429-Cys441, Cys433-Cys451, and Cys453-Cys466. Residues 481–508 (QFQLILTIVGTIAGALILILLIAFIVSA) traverse the membrane as a helical segment. At 509–573 (RSKNKKKDGE…NQRSMPRPDY (65 aa)) the chain is on the cytoplasmic side. The interval 548–573 (PKVRTGVPSQTPNPYANQRSMPRPDY) is disordered. Positions 554–567 (VPSQTPNPYANQRS) are enriched in polar residues.

As to quaternary structure, homodimer of beta subunits. In terms of processing, cleaved into two subunits, alpha and beta, probably between the first EGF domain and the SEA domain. Beta subunit contains the cytoplasmic tail and alpha subunit the extracellular tail. The homooligomerization into dimers is dependent on intrachain disulfide bonds. Post-translationally, highly N-glycosylated.

It localises to the cell membrane. The protein resides in the secreted. Its function is as follows. Epithelial and hemopoietic transmembrane mucin that may play a role in cell signaling. The sequence is that of Mucin-13 (Muc13) from Mus musculus (Mouse).